Reading from the N-terminus, the 1578-residue chain is Pentafunctional AROM polypeptide (1578 aa).

The tract at residues 1 to 393 (MSVELAKVSI…YGTSAHVVSD (393 aa)) is 3-dehydroquinate synthase. Residues 44–46 (DTN), 79–82 (EAHK), 110–112 (GGV), and D115 contribute to the NAD(+) site. Position 126 (R126) interacts with 7-phospho-2-dehydro-3-deoxy-D-arabino-heptonate. Residue 135–136 (TS) participates in NAD(+) binding. Positions 142 and 148 each coordinate 7-phospho-2-dehydro-3-deoxy-D-arabino-heptonate. K157 is a binding site for NAD(+). N158 is a 7-phospho-2-dehydro-3-deoxy-D-arabino-heptonate binding site. Residues 175–178 (WLET) and N186 contribute to the NAD(+) site. Residue E190 participates in Zn(2+) binding. 7-phospho-2-dehydro-3-deoxy-D-arabino-heptonate contacts are provided by residues 190 to 193 (EVIK) and K259. The Proton acceptor; for 3-dehydroquinate synthase activity role is filled by E269. Residues 273–277 (RNLLN) and H280 contribute to the 7-phospho-2-dehydro-3-deoxy-D-arabino-heptonate site. Zn(2+) is bound at residue H280. The active-site Proton acceptor; for 3-dehydroquinate synthase activity is the H284. 2 residues coordinate 7-phospho-2-dehydro-3-deoxy-D-arabino-heptonate: H296 and K365. Residue H296 coordinates Zn(2+). An EPSP synthase region spans residues 406 to 863 (VHPFNNIPEG…WDVLHSQLGA (458 aa)). C845 (for EPSP synthase activity) is an active-site residue. The tract at residues 882–1071 (VVIIGMRAAG…VPSRRSAFVC (190 aa)) is shikimate kinase. 886-893 (GMRAAGKS) is a binding site for ATP. The tract at residues 1072–1284 (LTFEDLSDHL…AAPGQLTLAE (213 aa)) is 3-dehydroquinase. The active-site Proton acceptor; for 3-dehydroquinate dehydratase activity is H1189. K1218 acts as the Schiff-base intermediate with substrate; for 3-dehydroquinate dehydratase activity in catalysis. The tract at residues 1297–1578 (AKKFFVIGSP…KAIFDAVTQE (282 aa)) is shikimate dehydrogenase.

It in the N-terminal section; belongs to the sugar phosphate cyclases superfamily. Dehydroquinate synthase family. The protein in the 2nd section; belongs to the EPSP synthase family. In the 3rd section; belongs to the shikimate kinase family. This sequence in the 4th section; belongs to the type-I 3-dehydroquinase family. It in the C-terminal section; belongs to the shikimate dehydrogenase family. As to quaternary structure, homodimer. The cofactor is Zn(2+).

It localises to the cytoplasm. It carries out the reaction 7-phospho-2-dehydro-3-deoxy-D-arabino-heptonate = 3-dehydroquinate + phosphate. The enzyme catalyses 3-dehydroquinate = 3-dehydroshikimate + H2O. It catalyses the reaction shikimate + NADP(+) = 3-dehydroshikimate + NADPH + H(+). The catalysed reaction is shikimate + ATP = 3-phosphoshikimate + ADP + H(+). It carries out the reaction 3-phosphoshikimate + phosphoenolpyruvate = 5-O-(1-carboxyvinyl)-3-phosphoshikimate + phosphate. Its pathway is metabolic intermediate biosynthesis; chorismate biosynthesis; chorismate from D-erythrose 4-phosphate and phosphoenolpyruvate: step 2/7. It functions in the pathway metabolic intermediate biosynthesis; chorismate biosynthesis; chorismate from D-erythrose 4-phosphate and phosphoenolpyruvate: step 3/7. The protein operates within metabolic intermediate biosynthesis; chorismate biosynthesis; chorismate from D-erythrose 4-phosphate and phosphoenolpyruvate: step 4/7. It participates in metabolic intermediate biosynthesis; chorismate biosynthesis; chorismate from D-erythrose 4-phosphate and phosphoenolpyruvate: step 5/7. Its pathway is metabolic intermediate biosynthesis; chorismate biosynthesis; chorismate from D-erythrose 4-phosphate and phosphoenolpyruvate: step 6/7. The AROM polypeptide catalyzes 5 consecutive enzymatic reactions in prechorismate polyaromatic amino acid biosynthesis. The protein is Pentafunctional AROM polypeptide of Kluyveromyces lactis (strain ATCC 8585 / CBS 2359 / DSM 70799 / NBRC 1267 / NRRL Y-1140 / WM37) (Yeast).